Reading from the N-terminus, the 313-residue chain is tRNA dimethylallyltransferase (313 aa).

G10–T17 lines the ATP pocket. T12–T17 serves as a coordination point for substrate. Interaction with substrate tRNA stretches follow at residues D35–M38, Q159–R163, and R240–R245.

It belongs to the IPP transferase family. In terms of assembly, monomer. It depends on Mg(2+) as a cofactor.

The enzyme catalyses adenosine(37) in tRNA + dimethylallyl diphosphate = N(6)-dimethylallyladenosine(37) in tRNA + diphosphate. In terms of biological role, catalyzes the transfer of a dimethylallyl group onto the adenine at position 37 in tRNAs that read codons beginning with uridine, leading to the formation of N6-(dimethylallyl)adenosine (i(6)A). This is tRNA dimethylallyltransferase from Legionella pneumophila (strain Lens).